Reading from the N-terminus, the 223-residue chain is Protein DEHYDRATION-INDUCED 19 homolog 3 (223 aa).

Phosphothreonine is present on threonine 114. Serine 116 is subject to Phosphoserine.

It belongs to the Di19 family. In terms of processing, phosphorylated in vitro by CPK3 or CPK11. In terms of tissue distribution, expressed in seedlings, roots, leaves, stems, flowers and siliques.

It is found in the nucleus. This Arabidopsis thaliana (Mouse-ear cress) protein is Protein DEHYDRATION-INDUCED 19 homolog 3 (DI19-3).